Here is a 233-residue protein sequence, read N- to C-terminus: Probable fimbrial chaperone protein ElfD (233 aa).

The N-terminal stretch at Met1–Ala26 is a signal peptide.

The protein belongs to the periplasmic pilus chaperone family.

It is found in the periplasm. Part of the elfADCG fimbrial operon, which could be required for adherence to host epithelial cells. Could be required for the biogenesis of the ElfA fimbriae. This chain is Probable fimbrial chaperone protein ElfD (elfD), found in Escherichia coli O157:H7.